A 447-amino-acid chain; its full sequence is T-box transcription factor TBX20 (447 aa).

Residues 62–81 form a disordered region; the sequence is DAHGEFGGGSGSSPSSSSLC. A DNA-binding region (T-box) is located at residues 109–288; sequence LWDKFHELGT…SNPFAKGFRD (180 aa). Residues 316–340 form a disordered region; the sequence is TYGGEEDVLGDESQTTPNRGSAFTT. Residues 327–340 show a composition bias toward polar residues; that stretch reads ESQTTPNRGSAFTT.

Its subcellular location is the nucleus. Its function is as follows. Acts as a transcriptional activator and repressor required for cardiac development and may have key roles in the maintenance of functional and structural phenotypes in adult heart. The protein is T-box transcription factor TBX20 (TBX20) of Homo sapiens (Human).